We begin with the raw amino-acid sequence, 195 residues long: MRDPFFYRWHSYIDDIFQEHKERLRPYTEAQLNFNGITVTGVQVAPERGPTNTFQTSWQQSDVDLSRGMDFVAPRGNVTARFTHLNHTPFTYSIQVNNSSGAQRMGMVRIFLAPKTDERGNEMLFRDQRLMMIEMDKFVVSMRPGQNTIRRRSTESTVTIPFERTFRSLEESRPDQTTDAQQQFNFCGCGWPHHM.

Residue His-10 participates in Cu cation binding. N-linked (GlcNAc...) asparagine glycans are attached at residues Asn-77, Asn-97, and Asn-98.

It belongs to the tyrosinase family. As to quaternary structure, heterodimer. The cofactor is Cu(2+).

The protein localises to the secreted. The catalysed reaction is 2 L-dopa + O2 = 2 L-dopaquinone + 2 H2O. It carries out the reaction L-tyrosine + O2 = L-dopaquinone + H2O. Its function is as follows. This is a copper-containing oxidase that functions in the formation of pigments such as melanins and other polyphenolic compounds. Catalyzes the rate-limiting conversions of tyrosine to DOPA, DOPA to DOPA-quinone and possibly 5,6 dihydroxyindole to indole-5'6 quinone. The polypeptide is Phenoloxidase subunit 1 (Simulium damnosum (Black fly)).